The following is a 201-amino-acid chain: Endoribonuclease YbeY (201 aa).

Residues His120, His124, and His130 each coordinate Zn(2+). Residues 151–201 form a disordered region; sequence DGADGADGADGARGAADGAADGGEGRRGDQGRRGDQGRGGGAGEPPAAPAR. Over residues 173-186 the composition is skewed to basic and acidic residues; it reads GEGRRGDQGRRGDQ.

Belongs to the endoribonuclease YbeY family. Requires Zn(2+) as cofactor.

It is found in the cytoplasm. Its function is as follows. Single strand-specific metallo-endoribonuclease involved in late-stage 70S ribosome quality control and in maturation of the 3' terminus of the 16S rRNA. This Frankia casuarinae (strain DSM 45818 / CECT 9043 / HFP020203 / CcI3) protein is Endoribonuclease YbeY.